The chain runs to 395 residues: Leukosialin (395 aa).

The first 19 residues, 1–19 (MALHLLLLFGACWVQVASP), serve as a signal peptide directing secretion. Residues 20–248 (DSLQRTTMLP…TRSPSQESSG (229 aa)) lie on the Extracellular side of the membrane. The segment covering 27-56 (MLPSTPHITAPSTSEAQNASPSVSVGSGTV) has biased composition (polar residues). The tract at residues 27–245 (MLPSTPHITA…PITTRSPSQE (219 aa)) is disordered. The span at 73 to 88 (SLTPLETTELSSLETS) shows a compositional bias: low complexity. 2 stretches are compositionally biased toward polar residues: residues 89–111 (AGASMSTPVPEPTASQEVSSKTS) and 145–154 (TAASTSISKG). Low complexity predominate over residues 155–166 (TSAPPTTVTTSS). N167 carries N-linked (GlcNAc...) asparagine glycosylation. The span at 167–196 (NETSGPSVATTVSSKTSGPPVTTATGSLGP) shows a compositional bias: polar residues. Low complexity predominate over residues 205–241 (ATTATSSVESSSVARGTSVSSRKTSTTSTQDPITTRS). Residues 249-271 (MLLVPMLIALVVVLALVALLLLW) traverse the membrane as a helical segment. The required for interaction with EZR, MSN and RDX and for co-localization to microvilli stretch occupies residues 272–302 (RQRQKRRTGALTLSGGGKRNGVVDAWAGPAR). Residues 272 to 395 (RQRQKRRTGA…AKDEAAPQSL (124 aa)) are Cytoplasmic-facing. Positions 276-290 (KRRTGALTLSGGGKR) match the Nuclear localization signal motif. S285 and S328 each carry phosphoserine. Residues 303–395 (VPDEEATTTS…AKDEAAPQSL (93 aa)) form a disordered region. Over residues 327–338 (GSGQRPTLTTFF) the composition is skewed to polar residues. T333 carries the post-translational modification Phosphothreonine. A phosphoserine mark is found at S339 and S343. S347 carries the phosphoserine; by PKC/PRKCQ modification. Position 371 is a phosphoserine (S371). At T378 the chain carries Phosphothreonine. Residues 385–395 (QAKDEAAPQSL) show a composition bias toward basic and acidic residues.

Interacts with SIGLEC1. As to quaternary structure, interacts with isoform 2 of HIPK2. Interacts with CTNNB1. Interacts with RDX (via FERM domain). Interacts with EZR. Interacts with MSN. Post-translationally, phosphorylation at Ser-347 is regulated by chemokines, requires its association with ERM proteins (EZR, RDX and MSN) and is essential for its function in the regulation of T-cell trafficking to lymph nodes. Has a high content of sialic acid and O-linked carbohydrate structures. In terms of processing, cleavage by CTSG releases its extracellular domain and triggers its intramembrane proteolysis by gamma-secretase releasing the CD43 cytoplasmic tail chain (CD43-ct) which translocates to the nucleus. Post-translationally, sumoylated. In terms of tissue distribution, cell surface of thymocytes, T-lymphocytes, neutrophils, plasma cells and myelomas.

Its subcellular location is the membrane. The protein resides in the cell projection. It is found in the microvillus. It localises to the uropodium. The protein localises to the nucleus. Its subcellular location is the PML body. In terms of biological role, predominant cell surface sialoprotein of leukocytes which regulates multiple T-cell functions, including T-cell activation, proliferation, differentiation, trafficking and migration. Positively regulates T-cell trafficking to lymph-nodes via its association with ERM proteins (EZR, RDX and MSN). Negatively regulates Th2 cell differentiation and predisposes the differentiation of T-cells towards a Th1 lineage commitment. Promotes the expression of IFN-gamma by T-cells during T-cell receptor (TCR) activation of naive cells and induces the expression of IFN-gamma by CD4(+) T-cells and to a lesser extent by CD8(+) T-cells. Plays a role in preparing T-cells for cytokine sensing and differentiation into effector cells by inducing the expression of cytokine receptors IFNGR and IL4R, promoting IFNGR and IL4R signaling and by mediating the clustering of IFNGR with TCR. Acts as a major E-selectin ligand responsible for Th17 cell rolling on activated vasculature and recruitment during inflammation. Mediates Th17 cells, but not Th1 cells, adhesion to E-selectin. Acts as a T-cell counter-receptor for SIGLEC1. Protects cells from apoptotic signals, promoting cell survival. This is Leukosialin (Spn) from Mus musculus (Mouse).